The following is a 1620-amino-acid chain: MAFFTAASKADFQHQLQTALAQHLGDKALPQVTLFAEQFFSLISLDELTQRRLSDLVGCTLSAWRLLERFDRDQPEVRVYNPDYEKHGWQSTHTAVEVLHPDLPFLVDSVRMELNRRGYSIHTLQTNVLSVRRSAKGELKEILPKGSQGKDVSQESLMYLEIDRCAHAGELRALEKAILEVLGEVRVTVADFEPMKAKARELLTWLGKAKLKVPAEELKEVRSYLEWLLDNHFTFLGYEEFSVADEADGGRMVYDEKSFLGLTRLLRAGLSKDDLHIEDYAVAYLREPVLLSFAKAAHPSRVHRPAYPDYVSIRELDGKGRVIRECRFMGLFTSSVYNESVNDIPFIRGKVAEVMRRSGFDTKAHLGKELAQVLEVLPRDDLFQTPVDELFSTALAIVRIQERNKIRVFLRKDPYGRFCYCLAYVPRDVYSTETRLKIQQVLMERLQASDCEFWTFFSESVLARVQFILRVDPKSRIDIDPARLEEEVIQACRSWQDDYSSLVVENLGEAKGTNVLADFPKGFPAGYRERFAPHFAVVDLQHLLSLSEQRPLVMSFYQPLAQGEQQLHCKLYHADTPLALSDVLPILENLGLRVLGEFPYRLRHQNGREYWIHDFAFTYAEGLDVDIQQLNEILQDAFVHIVSGDAENDAFNRLVLTANLPWRDVALLRAYARYLKQIRLGFDLGYIASALNAHTDIARELVRLFKTRFYLARKLTAEDLEDKQQKLEQAILGALDEVQVLNEDRILRRYLDLIKATLRTNFYQPDGNGQNKSYFSFKFNPKAIPELPRPVPKYEIFVYSPRVEGVHLRGGKVARGGLRWSDREEDFRTEVLGLVKAQQVKNAVIVPVGAKGGFVPRRLPLGGSRDEIQAEAIACYRIFISGLLDITDNLKEGEVVPPANVVRHDEDDPYLVVAADKGTATFSDIANGIAAEYGFWLGDAFASGGSAGYDHKGMGITAKGAWVSVQRHFRERGIDVQKDNISVIGIGDMAGDVFGNGLLMSDKLQLVAAFNHMHIFIDPNPDAASSFVERQRLFNLPRSSWADYDAKLISAGGGIFLRSAKSIAITPEMKARFDIQADRLAPTELIHALLKAPVDLLWNGGIGTYVKSSKETHADVGDKANDGLRVDGRELRAKVVGEGGNLGMTQLARVEFGLHGGANNTDFIDNAGGVDCSDHEVNIKILLNEVVQAGDMTEKQRNALLVKMTDAVGALVLGNNYKQTQALSLAQRRARERIAEYKRLMGDLEARGKLDRALEFLPSDEELAERISAGQGLTRAELSVLISYSKIDLKESLLKSLVPDDDYLTRDMETAFPALLAEKFGDAMRRHRLKREIVSTQIANDLVNHMGITFVQRLKESTGMSAANVAGAYVIVRDVFHLPHWFRQIENLDYQVPADIQLTLMDELMRLGRRATRWFLRSRRNELDAARDVAHFGPRIAALGLKLNELLEGPTRELWQARYQTYVDAGVPELLARMVAGTSHLYTLLPIIEASDVTGQDTAEVAKAYFAVGSALDLTWYLQQITNLPVENNWQALAREAFRDDLDWQQRAITVSVLQMQDGPKEVEARVGLWLEQHLPLVERWRAMLVELRAASGTDYAMYAVANRELMDLAQSSQHGVCIP.

K851 is an active-site residue.

This sequence belongs to the Glu/Leu/Phe/Val dehydrogenases family. Homotetramer. Post-translationally, contains disulfide bonds (interchain).

The catalysed reaction is L-glutamate + NAD(+) + H2O = 2-oxoglutarate + NH4(+) + NADH + H(+). With respect to regulation, activity subject to allosteric control by arginine and citrate, which function as positive and negative effectors, respectively. Involved in arginine catabolism by converting L-glutamate, into 2-oxoglutarate, which is then channeled into the tricarboxylic acid cycle. Can also utilize other amino acids of the glutamate family. The protein is NAD-specific glutamate dehydrogenase (gdhB) of Pseudomonas aeruginosa (strain ATCC 15692 / DSM 22644 / CIP 104116 / JCM 14847 / LMG 12228 / 1C / PRS 101 / PAO1).